We begin with the raw amino-acid sequence, 224 residues long: Serum amyloid P-component (224 aa).

The first 19 residues, 1–19 (MNKLMSWVSVLIILPEAFA), serve as a signal peptide directing secretion. Positions 24–224 (RGKVFVFPRE…YVIVKPMVWG (201 aa)) constitute a Pentraxin (PTX) domain. An N-linked (GlcNAc...) asparagine glycan is attached at Asn51. Cys55 and Cys114 are oxidised to a cystine. Asp77, Asn78, Glu155, Gln156, and Asp157 together coordinate Ca(2+). N-linked (GlcNAc...) asparagine glycosylation occurs at Asn166. Position 167 (Gln167) interacts with Ca(2+).

It belongs to the pentraxin family. As to quaternary structure, homopentamer. Pentraxin (or pentaxin) have a discoid arrangement of 5 non-covalently bound subunits. It depends on Ca(2+) as a cofactor.

It localises to the secreted. In Bos taurus (Bovine), this protein is Serum amyloid P-component (APCS).